The following is a 266-amino-acid chain: Family of serine hydrolases 3 (266 aa).

Catalysis depends on charge relay system residues serine 117, aspartate 180, and histidine 209.

The protein belongs to the AB hydrolase 3 family.

Its function is as follows. Serine hydrolase of unknown specificity. This is Family of serine hydrolases 3 (FSH3) from Saccharomyces cerevisiae (strain ATCC 204508 / S288c) (Baker's yeast).